The sequence spans 90 residues: Phaiodotoxin (90 aa).

The first 18 residues, 1-18 (MKTIPLLFLLFIYFECDG), serve as a signal peptide directing secretion. One can recognise an LCN-type CS-alpha/beta domain in the interval 19 to 90 (KFIRHKDESF…CFGALESKCA (72 aa)). Cystine bridges form between cysteine 31–cysteine 56, cysteine 41–cysteine 68, cysteine 45–cysteine 70, and cysteine 81–cysteine 89.

As to expression, expressed by the venom gland.

It localises to the secreted. In terms of biological role, sodium channel (Nav) specific neurotoxin. Causes impairment of movement and mild paralysis in crickets at a dose of 0.5 ug per animal. A dose of 0.8 ug per cricket causes clear flaccid paralysis. A dose of 1.0 ug per cricket causes death within 2 hours. Is not toxic to mice at a dose of 100 ug per 20 g mouse weight. This is Phaiodotoxin from Anuroctonus phaiodactylus (Mafia scorpion).